The sequence spans 146 residues: Hemoglobin subunit beta (146 aa).

Valine 1 carries the post-translational modification N-acetylvaline. The 145-residue stretch at 2 to 146 (HLTGEEKSAV…VANALAHKYH (145 aa)) folds into the Globin domain. Residue threonine 12 is modified to Phosphothreonine. Residue serine 44 is modified to Phosphoserine. Lysine 59 carries the post-translational modification N6-acetyllysine. Residue histidine 63 coordinates heme b. Lysine 82 is modified (N6-acetyllysine). Histidine 92 is a binding site for heme b. Cysteine 93 bears the S-nitrosocysteine mark. Lysine 144 is subject to N6-acetyllysine.

This sequence belongs to the globin family. Heterotetramer of two alpha chains and two beta chains. Red blood cells.

Involved in oxygen transport from the lung to the various peripheral tissues. The polypeptide is Hemoglobin subunit beta (HBB) (Saguinus oedipus (Cotton-top tamarin)).